A 157-amino-acid polypeptide reads, in one-letter code: Protein-export protein SecB (157 aa).

It belongs to the SecB family. In terms of assembly, homotetramer, a dimer of dimers. One homotetramer interacts with 1 SecA dimer.

The protein resides in the cytoplasm. Functionally, one of the proteins required for the normal export of preproteins out of the cell cytoplasm. It is a molecular chaperone that binds to a subset of precursor proteins, maintaining them in a translocation-competent state. It also specifically binds to its receptor SecA. The polypeptide is Protein-export protein SecB (Dichelobacter nodosus (strain VCS1703A)).